The primary structure comprises 198 residues: Protein GrpE (198 aa).

Over residues 1–18 (MSEQEQKVEIPEVEKQEE) the composition is skewed to basic and acidic residues. A disordered region spans residues 1-33 (MSEQEQKVEIPEVEKQEEVVVEETQQAEHSQEF).

The protein belongs to the GrpE family. As to quaternary structure, homodimer.

The protein localises to the cytoplasm. Participates actively in the response to hyperosmotic and heat shock by preventing the aggregation of stress-denatured proteins, in association with DnaK and GrpE. It is the nucleotide exchange factor for DnaK and may function as a thermosensor. Unfolded proteins bind initially to DnaJ; upon interaction with the DnaJ-bound protein, DnaK hydrolyzes its bound ATP, resulting in the formation of a stable complex. GrpE releases ADP from DnaK; ATP binding to DnaK triggers the release of the substrate protein, thus completing the reaction cycle. Several rounds of ATP-dependent interactions between DnaJ, DnaK and GrpE are required for fully efficient folding. This chain is Protein GrpE, found in Haemophilus influenzae (strain ATCC 51907 / DSM 11121 / KW20 / Rd).